The primary structure comprises 368 residues: Saccharopine dehydrogenase [NAD(+), L-lysine-forming] (368 aa).

The L-saccharopine site is built by Arg-18 and Lys-77. Lys-77 (proton acceptor) is an active-site residue. Ser-85 is modified (phosphoserine). His-96 acts as the Proton donor in catalysis. An L-saccharopine-binding site is contributed by Gln-101. An NAD(+)-binding site is contributed by Arg-130. L-saccharopine-binding residues include Arg-131 and Phe-135. NAD(+) contacts are provided by residues 203 to 204 (GR), Asp-227, Thr-231, Tyr-251, and Val-278. A disulfide bridge links Cys-205 with Cys-249. 279–281 (SCD) is an L-saccharopine binding site. 319–322 (IDHL) provides a ligand contact to NAD(+).

Belongs to the AlaDH/PNT family. In terms of assembly, monomer.

It carries out the reaction L-saccharopine + NAD(+) + H2O = L-lysine + 2-oxoglutarate + NADH + H(+). It participates in amino-acid biosynthesis; L-lysine biosynthesis via AAA pathway; L-lysine from L-alpha-aminoadipate (fungal route): step 3/3. In terms of biological role, catalyzes the NAD(+)-dependent cleavage of saccharopine to L-lysine and 2-oxoglutarate, the final step in the alpha-aminoadipate (AAA) pathway for lysin biosynthesis. The sequence is that of Saccharopine dehydrogenase [NAD(+), L-lysine-forming] from Schizosaccharomyces pombe (strain 972 / ATCC 24843) (Fission yeast).